Consider the following 107-residue polypeptide: DNA-directed RNA polymerase subunit omega (107 aa).

Residues Met81–Gly107 are disordered.

It belongs to the RNA polymerase subunit omega family. In terms of assembly, the RNAP catalytic core consists of 2 alpha, 1 beta, 1 beta' and 1 omega subunit. When a sigma factor is associated with the core the holoenzyme is formed, which can initiate transcription.

It catalyses the reaction RNA(n) + a ribonucleoside 5'-triphosphate = RNA(n+1) + diphosphate. Promotes RNA polymerase assembly. Latches the N- and C-terminal regions of the beta' subunit thereby facilitating its interaction with the beta and alpha subunits. This chain is DNA-directed RNA polymerase subunit omega, found in Alkalilimnicola ehrlichii (strain ATCC BAA-1101 / DSM 17681 / MLHE-1).